Reading from the N-terminus, the 252-residue chain is Imidazole glycerol phosphate synthase subunit HisF (252 aa).

Residues Asp11 and Asp130 contribute to the active site.

This sequence belongs to the HisA/HisF family. Heterodimer of HisH and HisF.

The protein localises to the cytoplasm. It catalyses the reaction 5-[(5-phospho-1-deoxy-D-ribulos-1-ylimino)methylamino]-1-(5-phospho-beta-D-ribosyl)imidazole-4-carboxamide + L-glutamine = D-erythro-1-(imidazol-4-yl)glycerol 3-phosphate + 5-amino-1-(5-phospho-beta-D-ribosyl)imidazole-4-carboxamide + L-glutamate + H(+). Its pathway is amino-acid biosynthesis; L-histidine biosynthesis; L-histidine from 5-phospho-alpha-D-ribose 1-diphosphate: step 5/9. Its function is as follows. IGPS catalyzes the conversion of PRFAR and glutamine to IGP, AICAR and glutamate. The HisF subunit catalyzes the cyclization activity that produces IGP and AICAR from PRFAR using the ammonia provided by the HisH subunit. The protein is Imidazole glycerol phosphate synthase subunit HisF of Bacillus mycoides (strain KBAB4) (Bacillus weihenstephanensis).